The primary structure comprises 434 residues: Methylenetetrahydrofolate--tRNA-(uracil-5-)-methyltransferase TrmFO (434 aa).

FAD is bound at residue 10-15; that stretch reads GAGLAG.

The protein belongs to the MnmG family. TrmFO subfamily. FAD serves as cofactor.

It localises to the cytoplasm. The catalysed reaction is uridine(54) in tRNA + (6R)-5,10-methylene-5,6,7,8-tetrahydrofolate + NADH + H(+) = 5-methyluridine(54) in tRNA + (6S)-5,6,7,8-tetrahydrofolate + NAD(+). It catalyses the reaction uridine(54) in tRNA + (6R)-5,10-methylene-5,6,7,8-tetrahydrofolate + NADPH + H(+) = 5-methyluridine(54) in tRNA + (6S)-5,6,7,8-tetrahydrofolate + NADP(+). Functionally, catalyzes the folate-dependent formation of 5-methyl-uridine at position 54 (M-5-U54) in all tRNAs. The protein is Methylenetetrahydrofolate--tRNA-(uracil-5-)-methyltransferase TrmFO of Bacillus cereus (strain G9842).